Here is a 593-residue protein sequence, read N- to C-terminus: Glucose-6-phosphate 1-dehydrogenase, chloroplastic (593 aa).

NADP(+)-binding positions include Gly-116 to Lys-123 and Arg-150. Cys-168 and Cys-176 are joined by a disulfide. Lys-253 is a binding site for NADP(+). Residues Lys-253, His-283–Lys-287, Glu-321, and Asp-340 each bind D-glucose 6-phosphate. Catalysis depends on His-345, which acts as the Proton acceptor. Lys-438 serves as a coordination point for NADP(+). Residues Lys-441 and Arg-446 each contribute to the D-glucose 6-phosphate site. Positions 451 and 480 each coordinate NADP(+). D-glucose 6-phosphate is bound at residue Gln-482. Residues Tyr-488–Lys-490 and Arg-573 contribute to the NADP(+) site.

This sequence belongs to the glucose-6-phosphate dehydrogenase family. As to quaternary structure, homodimer.

The protein localises to the plastid. The protein resides in the chloroplast. The enzyme catalyses D-glucose 6-phosphate + NADP(+) = 6-phospho-D-glucono-1,5-lactone + NADPH + H(+). The protein operates within carbohydrate degradation; pentose phosphate pathway; D-ribulose 5-phosphate from D-glucose 6-phosphate (oxidative stage): step 1/3. Regulated by metabolites. Post-translationally inactivated by cysteine-mediated redox modification via the ferredoxin-thioredoxin system in the light and this avoids futile cycles with photosynthetic CO2 fixation. Catalyzes the rate-limiting step of the oxidative pentose-phosphate pathway, which represents a route for the dissimilation of carbohydrates besides glycolysis. The main function of this enzyme is to provide reducing power (NADPH) and pentose phosphates for fatty acid and nucleic acid synthesis which are involved in membrane synthesis and cell division. This Nicotiana tabacum (Common tobacco) protein is Glucose-6-phosphate 1-dehydrogenase, chloroplastic.